The chain runs to 135 residues: S-protein homolog 7 (135 aa).

The signal sequence occupies residues 1–20; the sequence is MNNLFVLVIIIVLSAGSNNG.

It belongs to the plant self-incompatibility (S1) protein family.

The protein localises to the secreted. In Arabidopsis thaliana (Mouse-ear cress), this protein is S-protein homolog 7.